A 231-amino-acid polypeptide reads, in one-letter code: Cytochrome c oxidase subunit 2 (231 aa).

At 1 to 14 (MAHPVHVGLKEATS) the chain is on the mitochondrial intermembrane side. A helical transmembrane segment spans residues 15–45 (PFMEELIAFHDHTLMIIFLISSLVLYIISMM). Topologically, residues 46-59 (LTTKLTHTSTMNAQ) are mitochondrial matrix. A helical membrane pass occupies residues 60–87 (EIEIIWTILPAIILIMIALPSLRILYMT). The Mitochondrial intermembrane portion of the chain corresponds to 88 to 231 (DEFNKPYLTL…WASYLYIVSL (144 aa)). The Cu cation site is built by H161, C196, E198, C200, H204, and M207. E198 lines the Mg(2+) pocket.

It belongs to the cytochrome c oxidase subunit 2 family. In terms of assembly, component of the cytochrome c oxidase (complex IV, CIV), a multisubunit enzyme composed of 14 subunits. The complex is composed of a catalytic core of 3 subunits MT-CO1, MT-CO2 and MT-CO3, encoded in the mitochondrial DNA, and 11 supernumerary subunits COX4I, COX5A, COX5B, COX6A, COX6B, COX6C, COX7A, COX7B, COX7C, COX8 and NDUFA4, which are encoded in the nuclear genome. The complex exists as a monomer or a dimer and forms supercomplexes (SCs) in the inner mitochondrial membrane with NADH-ubiquinone oxidoreductase (complex I, CI) and ubiquinol-cytochrome c oxidoreductase (cytochrome b-c1 complex, complex III, CIII), resulting in different assemblies (supercomplex SCI(1)III(2)IV(1) and megacomplex MCI(2)III(2)IV(2)). Found in a complex with TMEM177, COA6, COX18, COX20, SCO1 and SCO2. Interacts with TMEM177 in a COX20-dependent manner. Interacts with COX20. Interacts with COX16. Cu cation is required as a cofactor.

It localises to the mitochondrion inner membrane. It catalyses the reaction 4 Fe(II)-[cytochrome c] + O2 + 8 H(+)(in) = 4 Fe(III)-[cytochrome c] + 2 H2O + 4 H(+)(out). Component of the cytochrome c oxidase, the last enzyme in the mitochondrial electron transport chain which drives oxidative phosphorylation. The respiratory chain contains 3 multisubunit complexes succinate dehydrogenase (complex II, CII), ubiquinol-cytochrome c oxidoreductase (cytochrome b-c1 complex, complex III, CIII) and cytochrome c oxidase (complex IV, CIV), that cooperate to transfer electrons derived from NADH and succinate to molecular oxygen, creating an electrochemical gradient over the inner membrane that drives transmembrane transport and the ATP synthase. Cytochrome c oxidase is the component of the respiratory chain that catalyzes the reduction of oxygen to water. Electrons originating from reduced cytochrome c in the intermembrane space (IMS) are transferred via the dinuclear copper A center (CU(A)) of subunit 2 and heme A of subunit 1 to the active site in subunit 1, a binuclear center (BNC) formed by heme A3 and copper B (CU(B)). The BNC reduces molecular oxygen to 2 water molecules using 4 electrons from cytochrome c in the IMS and 4 protons from the mitochondrial matrix. This chain is Cytochrome c oxidase subunit 2 (MT-CO2), found in Brachyteles hypoxanthus (Northern muriqui).